Consider the following 433-residue polypeptide: MDLWKKGKRFFRFSKEPVITCINTSYAGKEIIFDLIANPQMETKDVNLTLDFDAPIFHRKAGIDGLLTLTNKSKVNEIQLISIEVFIIGICKHKFHSSTVFLCLGTHIMEGQYIVPEELLDYAKKRGKNRIISIPNHSTVDIPFQVNFPKHVEVGPGRQIHSRVKVQYFAYANIIYQSADKLRSRRECQEINVLPSISPSSFLDSPSIMCVSKQPDLKKDRQRKSATRITVSLPRTDWLAGESVVSKIKIENHSKSSIKTLKLCLYRRIIGFDPPSWKTQQMMSHLNLSRKNSEVSKTCKCLQKETIRCNKKSNCYNWNGIAALETYTTECHIQIPDKEATITVGSNFEVDHFLKISVGNKLWTLNRVEIPFKIISANSLSLEQENVFLNLEKLTNKASPHGLPISVRLGNSLSYDALSAARRMRNTRYFLYS.

It belongs to the arrestin family.

This is an uncharacterized protein from Schizosaccharomyces pombe (strain 972 / ATCC 24843) (Fission yeast).